The primary structure comprises 141 residues: Nucleoside triphosphatase NudI (141 aa).

In terms of domain architecture, Nudix hydrolase spans 1 to 141 (MRQRTIVCPL…RKTLRLKGLL (141 aa)). Residues 38 to 59 (GGVEPGERIEEALRREIREELG) carry the Nudix box motif.

The protein belongs to the Nudix hydrolase family. NudI subfamily. In terms of assembly, monomer. The cofactor is Mg(2+).

It carries out the reaction a ribonucleoside 5'-triphosphate + H2O = a ribonucleoside 5'-phosphate + diphosphate + H(+). The enzyme catalyses a 2'-deoxyribonucleoside 5'-triphosphate + H2O = a 2'-deoxyribonucleoside 5'-phosphate + diphosphate + H(+). The catalysed reaction is dUTP + H2O = dUMP + diphosphate + H(+). It catalyses the reaction dTTP + H2O = dTMP + diphosphate + H(+). It carries out the reaction dCTP + H2O = dCMP + diphosphate + H(+). Its function is as follows. Catalyzes the hydrolysis of nucleoside triphosphates, with a preference for pyrimidine deoxynucleoside triphosphates (dUTP, dTTP and dCTP). The sequence is that of Nucleoside triphosphatase NudI from Escherichia coli O6:K15:H31 (strain 536 / UPEC).